A 594-amino-acid chain; its full sequence is Adenine deaminase 1 (594 aa).

The protein belongs to the metallo-dependent hydrolases superfamily. Adenine deaminase family. Requires Mn(2+) as cofactor.

The enzyme catalyses adenine + H2O + H(+) = hypoxanthine + NH4(+). The sequence is that of Adenine deaminase 1 from Desulfotalea psychrophila (strain LSv54 / DSM 12343).